The primary structure comprises 229 residues: MVKKKAFLPLLYLTSIVFLPWWISLSFNKSLEFWITNWWNTRQSETFLTDIQEKSILEKFIELEELLLLDEMIKEYPETHLQTLRIGIHKETIQLIKMHNEDHIHMILHLSTNITSFIILSGYSILGNEELAILNSWVQEFLYNLSDTIKAFSILLLTDLCIGFHSPHGWELMIGYVYKDFGFAHNDQIISGLVSTFPVILDTIFKYWIFRYLNRISPSLVVIYHSMND.

The next 3 helical transmembrane spans lie at 7 to 27, 106 to 126, and 189 to 209; these read FLPL…SLSF, MILH…YSIL, and IISG…KYWI.

Belongs to the CemA family.

It is found in the plastid. Its subcellular location is the chloroplast inner membrane. The catalysed reaction is K(+)(in) + H(+)(out) = K(+)(out) + H(+)(in). Its function is as follows. Contributes to K(+)/H(+) antiport activity by supporting proton efflux to control proton extrusion and homeostasis in chloroplasts in a light-dependent manner to modulate photosynthesis. Prevents excessive induction of non-photochemical quenching (NPQ) under continuous-light conditions. Indirectly promotes efficient inorganic carbon uptake into chloroplasts. This Eucalyptus globulus subsp. globulus (Tasmanian blue gum) protein is Potassium/proton antiporter CemA.